Reading from the N-terminus, the 504-residue chain is FAD-dependent monooxygenase nsrK (504 aa).

Arginine 146 serves as a coordination point for FAD. Arginine 227 is an active-site residue. 2 residues coordinate FAD: aspartate 340 and glycine 353.

The protein belongs to the paxM FAD-dependent monooxygenase family. FAD is required as a cofactor.

It participates in secondary metabolite biosynthesis. In terms of biological role, FAD-dependent monooxygenase; part of the gene cluster that mediates the biosynthesis of the tetrahydroxanthone dimer neosartorin, which exhibits antibacterial activity. The two different monomeric units appear to be synthesized by the same set of enzymes, among which the Baeyer-Villiger monooxygenase nsrF is the key enzyme for the divergence of the biosynthetic routes. The pathway begins with the synthesis of atrochrysone thioester by the polyketide synthase nsrB. The atrochrysone carboxyl ACP thioesterase nsrC then breaks the thioester bond and releases the atrochrysone carboxylic acid from AacuL. Atrochrysone carboxylic acid is decarboxylated by the decarboxylase nsrE, and oxidized by the anthrone oxygenase nsrD to yield emodin. Emodin is then reduced to emodin hydroquinone by the oxidoreductase nsrR. A-ring reduction by the short chain dehydrogenase nsrJ, dehydration by the scytalone dehydratase-like protein nsrI and probable spontaneous re-oxidation, results in overall deoxygenation to chrysophanol. The Baeyer-Villiger monooxygenase nsrF accepts chrysophanol as a substrate to insert one oxygen atom at two different positions to yield the precursors of both monomric units. NsrF is promiscuous/flexible in interacting with the 2 (non methylated and methylated) aromatic rings of chrysophanol, thus diverging the biosynthetic pathway at this point. After the hydrolysis of the lactones, methylesterification by the methyltransferase nsrG yields respectively moniliphenone and 2,2',6'-trihydroxy-4-methyl-6-methoxya-cyldiphenylmethanone. The next steps are the hydroxylation by the FAD-dependent monooxygenase nsrK, followed by isomerization by the monooxygenase nsrQ. The short chain dehydrogenase/reductase nsrO then catalyzes the C-5 ketoreduction to give the xanthone skeleton of blennolide C and 5-acetylblennolide A. The acetyltransferase nsrL has a strict substrate specificity and uses only blennolide A but not blennolide C to yield 5-acetylblennolide A as the single-acetylated product. In the final step of the biosynthesis, the heterodimerization of the 2 xanthones, blennolide C and 5-acetylblennolide A, is catalyzed by the cytochrome P450 monooxygenase nsrP. NsrP can utilize at least three different xanthones as its substrates to perform the dimerization reaction. This is FAD-dependent monooxygenase nsrK from Aspergillus novofumigatus (strain IBT 16806).